Consider the following 738-residue polypeptide: MTTNELSPEEVRDSKIYIEWGLTEQEYDLIVKELKRLPNFTETGIFSGMWSEHVSYKKSKPILRKFWSSNERVLQGPGEGAGILDIGDNQAVVFKAESHNHPSFVEPYEGAATGVGGILRDIFSMGAQPIAVLDSLRFGELDNAHTKHIVDGVIAGIAGYGNAIGIPTVGGEIGFDGVYAGNPLVNVMAVGLMDQNAMQVGQAKGIGNSIIYVGAKTGRDGINGASFASAEFSSAEKSDRSAVQVGDPFLEKLVMDATLQAIREHSDIIVGIQDMGAAGLLSSSSEMAAKAGMGIHLNLDMVPQRETGMTPYELMLSESQERMVLVVKKGEEQAIIDLFQSADLDAVIIGQVTDDGRYRLNFKNEVVADVPVDFLTHAPKQDLPMIEPARLANFTDEQFEPDMGNVKETILTLLAQPTIASKASLFRHFDSQVRADTAIKPGGDAALIRIRDTQKALAMTTDVNARYLYLNPRVGAKMAVAEAARNIVSTGAKPIGITDGLNFGSPDNPEVYYELDQAVAGINDVAKQLDTPIISGNVSLYNETDGQAIYPTPMIGMVGLLEDITKATRTAFQKAGDNIYLVGRTKDSFNGSEIQKMQTGHIAGQLFDFNDEDELAAQQVILDVTDQRLLNSAHDLSEGGLIVGLLESAFAGNLGFDISVDLADKYLFSETPSRFVVSVSPENRTTFESLAGDRVIKLGVVTADDTINITTTTSDIQLSLIETKKIYQESIAWKLNAE.

Histidine 53 is a catalytic residue. Residues tyrosine 56 and lysine 95 each coordinate ATP. Glutamate 97 is a binding site for Mg(2+). Substrate-binding positions include 98 to 101 (SHNH) and arginine 120. Histidine 99 serves as the catalytic Proton acceptor. Aspartate 121 serves as a coordination point for Mg(2+). Glutamine 244 is a substrate binding site. Aspartate 274 lines the Mg(2+) pocket. 318 to 320 (ESQ) contributes to the substrate binding site. ATP contacts are provided by aspartate 499 and glycine 536. Mg(2+) is bound at residue asparagine 537. Serine 539 provides a ligand contact to substrate.

It belongs to the FGAMS family. Monomer. Part of the FGAM synthase complex composed of 1 PurL, 1 PurQ and 2 PurS subunits.

It localises to the cytoplasm. The catalysed reaction is N(2)-formyl-N(1)-(5-phospho-beta-D-ribosyl)glycinamide + L-glutamine + ATP + H2O = 2-formamido-N(1)-(5-O-phospho-beta-D-ribosyl)acetamidine + L-glutamate + ADP + phosphate + H(+). The protein operates within purine metabolism; IMP biosynthesis via de novo pathway; 5-amino-1-(5-phospho-D-ribosyl)imidazole from N(2)-formyl-N(1)-(5-phospho-D-ribosyl)glycinamide: step 1/2. Functionally, part of the phosphoribosylformylglycinamidine synthase complex involved in the purines biosynthetic pathway. Catalyzes the ATP-dependent conversion of formylglycinamide ribonucleotide (FGAR) and glutamine to yield formylglycinamidine ribonucleotide (FGAM) and glutamate. The FGAM synthase complex is composed of three subunits. PurQ produces an ammonia molecule by converting glutamine to glutamate. PurL transfers the ammonia molecule to FGAR to form FGAM in an ATP-dependent manner. PurS interacts with PurQ and PurL and is thought to assist in the transfer of the ammonia molecule from PurQ to PurL. The polypeptide is Phosphoribosylformylglycinamidine synthase subunit PurL (Leuconostoc mesenteroides subsp. mesenteroides (strain ATCC 8293 / DSM 20343 / BCRC 11652 / CCM 1803 / JCM 6124 / NCDO 523 / NBRC 100496 / NCIMB 8023 / NCTC 12954 / NRRL B-1118 / 37Y)).